A 163-amino-acid polypeptide reads, in one-letter code: Transcriptional repressor NrdR (163 aa).

Residues 3-34 fold into a zinc finger; sequence CPFCAHPEDKVVDSRESKEGESIRRRRECLKC. The 91-residue stretch at 49-139 folds into the ATP-cone domain; sequence YMVVKKDGRR…VYLDFKDVRE (91 aa).

The protein belongs to the NrdR family. The cofactor is Zn(2+).

Functionally, negatively regulates transcription of bacterial ribonucleotide reductase nrd genes and operons by binding to NrdR-boxes. This chain is Transcriptional repressor NrdR, found in Koribacter versatilis (strain Ellin345).